A 118-amino-acid polypeptide reads, in one-letter code: MAKGLSLFERRRQRVRTTLRAKGNHRPRLSVHRSGQHIYAQVIDDDQRRTVVAASTLEKAVRDKSGATVAAAAETGKRLAERASAAGITKVVFDRGGFLFHGRVKALADAAREGGLEF.

Belongs to the universal ribosomal protein uL18 family. Part of the 50S ribosomal subunit; part of the 5S rRNA/L5/L18/L25 subcomplex. Contacts the 5S and 23S rRNAs.

Functionally, this is one of the proteins that bind and probably mediate the attachment of the 5S RNA into the large ribosomal subunit, where it forms part of the central protuberance. The protein is Large ribosomal subunit protein uL18 of Zymomonas mobilis subsp. mobilis (strain ATCC 31821 / ZM4 / CP4).